A 1164-amino-acid chain; its full sequence is DNA-directed RNA polymerase subunit beta' (1164 aa).

The Zn(2+) site is built by C60, C62, C75, and C78. 3 residues coordinate Mg(2+): D449, D451, and D453. Zn(2+)-binding residues include C776, C850, C857, and C860.

It belongs to the RNA polymerase beta' chain family. In terms of assembly, the RNAP catalytic core consists of 2 alpha, 1 beta, 1 beta' and 1 omega subunit. When a sigma factor is associated with the core the holoenzyme is formed, which can initiate transcription. The cofactor is Mg(2+). It depends on Zn(2+) as a cofactor.

It carries out the reaction RNA(n) + a ribonucleoside 5'-triphosphate = RNA(n+1) + diphosphate. DNA-dependent RNA polymerase catalyzes the transcription of DNA into RNA using the four ribonucleoside triphosphates as substrates. The protein is DNA-directed RNA polymerase subunit beta' of Moorella thermoacetica (strain ATCC 39073 / JCM 9320).